The sequence spans 522 residues: Probable G-protein coupled receptor egl-47 (522 aa).

7 helical membrane passes run 140-160 (IIKLILYVNYIVLAVLLNSFL), 184-204 (ASMITATKPVINVFVIVLSAI), 238-258 (FVFFFTLLIIFFSALILKVVE), 276-296 (FILVPVLSLWNIIPLLYYHLY), 345-365 (PLLLFSLAWSLLVLCLTLYFL), 398-418 (ICWAAYQVVMAILHIIIICST), and 472-492 (LERTTFFTLISVIVTYSLLLF).

Belongs to the G-protein coupled receptor family. Expressed in some neurons in the head, the HSN neurons and the PVQ interneurons of the tail.

The protein resides in the membrane. Orphan receptor. Regulates egg-laying probably by activating guanine nucleotide-binding protein goa-1, in the hermaphrodite-specific neurons (HSNs). This chain is Probable G-protein coupled receptor egl-47, found in Caenorhabditis elegans.